The following is a 553-amino-acid chain: Ribonuclease J 2 (553 aa).

Residues histidine 69, histidine 71, histidine 138, and aspartate 160 each coordinate Zn(2+). Position 361–365 (361–365 (RVSGH)) interacts with substrate.

This sequence belongs to the metallo-beta-lactamase superfamily. RNA-metabolizing metallo-beta-lactamase-like family. Bacterial RNase J subfamily. As to quaternary structure, homodimer, may be a subunit of the RNA degradosome. Zn(2+) is required as a cofactor.

Its subcellular location is the cytoplasm. Its function is as follows. An RNase that has 5'-3' exonuclease and possibly endonuclease activity. Involved in maturation of rRNA and in some organisms also mRNA maturation and/or decay. Has an overlapping but not completely redundant role with RNase J1 in the decay of mRNA. The chain is Ribonuclease J 2 from Streptococcus pyogenes serotype M3 (strain ATCC BAA-595 / MGAS315).